The sequence spans 280 residues: Phosphatidylglycerol--prolipoprotein diacylglyceryl transferase (280 aa).

4 helical membrane-spanning segments follow: residues 23 to 43 (LRWY…LAGV), 58 to 78 (LLFW…VLFY), 93 to 113 (IWTG…ALWW), and 120 to 140 (CTFL…LGAG). Arg-141 contributes to the a 1,2-diacyl-sn-glycero-3-phospho-(1'-sn-glycerol) binding site. Helical transmembrane passes span 173-193 (PSQL…LWLY), 200-220 (IGAV…FVEF), and 241-261 (QGQI…VWAV).

This sequence belongs to the Lgt family.

It is found in the cell inner membrane. It carries out the reaction L-cysteinyl-[prolipoprotein] + a 1,2-diacyl-sn-glycero-3-phospho-(1'-sn-glycerol) = an S-1,2-diacyl-sn-glyceryl-L-cysteinyl-[prolipoprotein] + sn-glycerol 1-phosphate + H(+). It functions in the pathway protein modification; lipoprotein biosynthesis (diacylglyceryl transfer). Catalyzes the transfer of the diacylglyceryl group from phosphatidylglycerol to the sulfhydryl group of the N-terminal cysteine of a prolipoprotein, the first step in the formation of mature lipoproteins. In Pseudoalteromonas atlantica (strain T6c / ATCC BAA-1087), this protein is Phosphatidylglycerol--prolipoprotein diacylglyceryl transferase.